We begin with the raw amino-acid sequence, 244 residues long: Adenosylcobinamide-GDP ribazoletransferase (244 aa).

5 consecutive transmembrane segments (helical) span residues 31–51 (LLFYPVVGLLFGLLLWLASHL), 55–75 (APAPLHAALLLALWVLLSGAL), 109–129 (IAVVVLVLVLLLKFCALWVLV), 134–154 (GGWLVLAPVVGRAAMLGLFMG), and 188–208 (VVLGGSPGLWMLLLSLGVFLW).

Belongs to the CobS family. Requires Mg(2+) as cofactor.

The protein resides in the cell inner membrane. The enzyme catalyses alpha-ribazole + adenosylcob(III)inamide-GDP = adenosylcob(III)alamin + GMP + H(+). It carries out the reaction alpha-ribazole 5'-phosphate + adenosylcob(III)inamide-GDP = adenosylcob(III)alamin 5'-phosphate + GMP + H(+). It functions in the pathway cofactor biosynthesis; adenosylcobalamin biosynthesis; adenosylcobalamin from cob(II)yrinate a,c-diamide: step 7/7. Joins adenosylcobinamide-GDP and alpha-ribazole to generate adenosylcobalamin (Ado-cobalamin). Also synthesizes adenosylcobalamin 5'-phosphate from adenosylcobinamide-GDP and alpha-ribazole 5'-phosphate. This is Adenosylcobinamide-GDP ribazoletransferase from Pseudomonas entomophila (strain L48).